The chain runs to 1111 residues: Myosin IB heavy chain (1111 aa).

The region spanning 9-691 (QGTDDLVMLP…TVFLLEEALD (683 aa)) is the Myosin motor domain. Residue 102–109 (GESGAGKT) participates in ATP binding. Ser-332 carries the post-translational modification Phosphoserine. The segment at 547-627 (GSLQKKRPTT…GFAYRNTFDK (81 aa)) is actin-binding. Residues 729–913 (KERQRNSIDR…KGLIGTIASG (185 aa)) enclose the TH1 domain. Positions 910-1058 (IASGLPSSTD…PAPQPSRPTA (149 aa)) are disordered. The span at 914-928 (LPSSTDSTPKNYNPN) shows a compositional bias: polar residues. Low complexity-rich tracts occupy residues 929-944 (SMSQ…QSAG), 952-967 (GAGQ…QQRP), and 991-1012 (PMGA…LPQP). Gly residues predominate over residues 1017–1040 (GAPGGRGAPMGRGAPGGGPAGAGG). Positions 1053 to 1111 (PSRPTAKALYDYDASSTDELSFKEGDIIFIVQKDNGGWTQGELKSGQKGWAPTNYLQYN) constitute an SH3 domain.

It belongs to the TRAFAC class myosin-kinesin ATPase superfamily. Myosin family. In terms of assembly, myosin I heavy chain is single-headed. Dimer of a heavy and a light chain. Inability to self-assemble into filaments.

It localises to the cell projection. The protein localises to the pseudopodium. Its subcellular location is the cytoplasm. It is found in the cell cortex. Its function is as follows. Myosin is a protein that binds to actin and has ATPase activity that is activated by actin. Myosin IB may have a role in chemotaxis and aggregation; it could serve to stabilize and even retract cortical structures, such as pseudopods and lamellopods. Involved in the whole cell motility of aggregation-stages cells. Overexpression results in significant decrease in the rate of cellular translocation and fluid-phase pinocytosis and abnormalities in the normal rearrangement of the actin cytoskeleton. The sequence is that of Myosin IB heavy chain (myoB) from Dictyostelium discoideum (Social amoeba).